The chain runs to 544 residues: Chaperonin GroEL 2 (544 aa).

Residues 30–33, lysine 51, 87–91, glycine 415, and aspartate 496 each bind ATP; these read TLGP and DGTTT.

This sequence belongs to the chaperonin (HSP60) family. In terms of assembly, forms a cylinder of 14 subunits composed of two heptameric rings stacked back-to-back. Interacts with the co-chaperonin GroES.

The protein resides in the cytoplasm. It carries out the reaction ATP + H2O + a folded polypeptide = ADP + phosphate + an unfolded polypeptide.. In terms of biological role, together with its co-chaperonin GroES, plays an essential role in assisting protein folding. The GroEL-GroES system forms a nano-cage that allows encapsulation of the non-native substrate proteins and provides a physical environment optimized to promote and accelerate protein folding. In Rhizobium johnstonii (strain DSM 114642 / LMG 32736 / 3841) (Rhizobium leguminosarum bv. viciae), this protein is Chaperonin GroEL 2.